The primary structure comprises 596 residues: MRLLKFVCLLASVAAAKPTPGASHKVIEHLDFVPEGWQMVGAADPAAIIDFWLAIERENPEKLYDTIYDVSTPGRAQYGKHLKREELDDLLRPRVETSESIISWLTNGGVNPQHIRDEGDWVKFSTNVKTAEKLMNTRFNVFKDNLNSVSKIRTLEYSVPVAISAHVQMIQPTTLFGRQKPQNSLILNPLTKDLESMSVEEFAASQCRSLVTTACLRELYGLGDRVTQARDDNRIGVSGFLEEYAQYRDLELFLSRFEPSAKGFNFSEGLIAGGKNTQGGPGSSTEANLDMQYVVGLSHKAKVTYYSTAGRGPLVPDLSQPSQASNNNEPYLEQLRYLVKLPKNQLPSVLTTSYGETEQSLPASYTKATCDLFAQLGTMGVSVIFSSGDTGPGSSCQTNDGKNATRFNPIYPASCPFVTSIGGTVGTGPERAVSFSSGGFSDRFPCPQYQDNAVKGYLKILGNQWSGLFDPNGRAFPDIAAQGSNYAVYDKGRMTGVSGTSASAPAMAAIIAQLNDFRLAKGSPVLGFLNPWIYSKGFSGFTDIVDGGSRGCTGYDIYSGLKAKKVPYASWNATKGWDPVTGFGTPNFQALTKVLP.

The first 16 residues, 1 to 16 (MRLLKFVCLLASVAAA), serve as a signal peptide directing secretion. Positions 17-203 (KPTPGASHKV…LESMSVEEFA (187 aa)) are cleaved as a propeptide — removed in mature form. Residues 210–596 (LVTTACLREL…NFQALTKVLP (387 aa)) form the Peptidase S53 domain. Asparagine 265 carries N-linked (GlcNAc...) asparagine glycosylation. Catalysis depends on charge relay system residues glutamate 286 and aspartate 290. Asparagine 403 carries N-linked (GlcNAc...) asparagine glycosylation. The Charge relay system role is filled by serine 501. Ca(2+) contacts are provided by aspartate 543 and isoleucine 544. N-linked (GlcNAc...) asparagine glycosylation is present at asparagine 572. 2 residues coordinate Ca(2+): glycine 576 and aspartate 578.

The cofactor is Ca(2+).

The protein resides in the secreted. It localises to the extracellular space. It catalyses the reaction Release of an N-terminal tripeptide from a polypeptide.. Secreted tripeptidyl-peptidase which degrades proteins at acidic pHs and is involved in virulence. This is Probable tripeptidyl-peptidase SED2 (SED2) from Trichophyton verrucosum (strain HKI 0517).